A 287-amino-acid polypeptide reads, in one-letter code: Small ribosomal subunit protein uS10m (287 aa).

The N-terminal 33 residues, 1–33 (MSLFSPHRILLRTGSAFQLATATRALLSTSSQL), are a transit peptide targeting the mitochondrion. Residues 33–43 (LRNTKNAQSGL) are compositionally biased toward polar residues. Residues 33 to 84 (LRNTKNAQSGLAEQARAEEPVASSPSQTTRPEQKSLEEETTKQTQTHADSTV) form a disordered region. Positions 63–73 (PEQKSLEEETT) are enriched in basic and acidic residues. The span at 74–84 (KQTQTHADSTV) shows a compositional bias: polar residues.

It belongs to the universal ribosomal protein uS10 family. As to quaternary structure, part of the mitochondrial small ribosomal subunit.

Its subcellular location is the mitochondrion. Its function is as follows. Involved in mitochondrial genome encoded proteins translation. Involved in the binding of tRNA to the ribosomes. The protein is Small ribosomal subunit protein uS10m (rsm10) of Emericella nidulans (strain FGSC A4 / ATCC 38163 / CBS 112.46 / NRRL 194 / M139) (Aspergillus nidulans).